The following is a 431-amino-acid chain: MTAKWEKLEGNEGVLTVDVESAKVDEALDKAFKKVVKKVNVPGFRKGKVPRKIFERQFGVEALYQDALDILLPEAYAAAIDETGIEPVDRPEIDIEQMEQGNNLIFKATVTVKPEVQLGDYKGLEFEEKDTTVSDEDVEQELKSLQERQAELVVVEEEAIQEGDTAVLDFEGFVDGEAFEGGKAENYSLEIGSGQFIPGFEDQLVGLKAGEEKDVEVTFPEEYHAEELAGKPATFKVKIHDVKRKELPELDDEFAKDVDEEVESLDELKKKLREKLEKDRAHEADHEKRDTLIQKASENATIDIPEAMINTELDRMTQEFEQRLQMQGMNLEMYFQFSGQTQEQLREQMKEDAEKRVRVNLTLEAIANQENLEASDEDVEKELEKMAEMYQRSVDEIKSIFATQGGTDGIKADLKIQKAVDFLVEHSKAVS.

The PPIase FKBP-type domain maps to 163–248 (GDTAVLDFEG…IHDVKRKELP (86 aa)).

It belongs to the FKBP-type PPIase family. Tig subfamily.

It is found in the cytoplasm. The enzyme catalyses [protein]-peptidylproline (omega=180) = [protein]-peptidylproline (omega=0). Its function is as follows. Involved in protein export. Acts as a chaperone by maintaining the newly synthesized protein in an open conformation. Functions as a peptidyl-prolyl cis-trans isomerase. The polypeptide is Trigger factor (tig) (Halalkalibacterium halodurans (strain ATCC BAA-125 / DSM 18197 / FERM 7344 / JCM 9153 / C-125) (Bacillus halodurans)).